We begin with the raw amino-acid sequence, 33 residues long: EDCIAVGQLCVFWNIGRPCCSGLCVFACTVKLP.

3 cysteine pairs are disulfide-bonded: Cys3-Cys20, Cys10-Cys24, and Cys19-Cys28. Pro33 is modified (proline amide).

As to expression, expressed by the venom duct.

The protein resides in the secreted. Omega-conotoxins act at presynaptic membranes, they bind and block voltage-gated calcium channels (Cav). Has strong insecticidal properties at a dose of only 100 pmol/g of body weight (when injected into the haemocoel of the wax moth G.mellonella larvae). Provoques tremor and uncontrolled movements in insect larvae, that are typical symptoms caused by neurotoxins. On fish G.niger, intraperitoneal injection of the toxin causes full extension of the fins, change in posture, breathing difficulties (at 30 and 100 pmol/g body weight) and death (at 100 pmol/g body weight). In Conus ventricosus (Mediterranean cone), this protein is Omega-conotoxin-like Vn2.